A 171-amino-acid polypeptide reads, in one-letter code: Shikimate kinase (171 aa).

Gly14 to Thr19 is an ATP binding site. A Mg(2+)-binding site is contributed by Ser18. Substrate-binding residues include Asp36, Arg60, and Gly82. Arg120 contributes to the ATP binding site. A substrate-binding site is contributed by Arg139. Position 156 (Gln156) interacts with ATP.

This sequence belongs to the shikimate kinase family. As to quaternary structure, monomer. Mg(2+) is required as a cofactor.

It localises to the cytoplasm. The catalysed reaction is shikimate + ATP = 3-phosphoshikimate + ADP + H(+). It functions in the pathway metabolic intermediate biosynthesis; chorismate biosynthesis; chorismate from D-erythrose 4-phosphate and phosphoenolpyruvate: step 5/7. Catalyzes the specific phosphorylation of the 3-hydroxyl group of shikimic acid using ATP as a cosubstrate. This is Shikimate kinase from Shewanella sediminis (strain HAW-EB3).